A 264-amino-acid chain; its full sequence is 3-methyl-2-oxobutanoate hydroxymethyltransferase (264 aa).

Mg(2+)-binding residues include Asp45 and Asp84. Residues 45–46 (DS), Asp84, and Lys112 each bind 3-methyl-2-oxobutanoate. Residue Glu114 coordinates Mg(2+). Glu181 serves as the catalytic Proton acceptor.

Belongs to the PanB family. As to quaternary structure, homodecamer; pentamer of dimers. Mg(2+) serves as cofactor.

Its subcellular location is the cytoplasm. It carries out the reaction 3-methyl-2-oxobutanoate + (6R)-5,10-methylene-5,6,7,8-tetrahydrofolate + H2O = 2-dehydropantoate + (6S)-5,6,7,8-tetrahydrofolate. Its pathway is cofactor biosynthesis; (R)-pantothenate biosynthesis; (R)-pantoate from 3-methyl-2-oxobutanoate: step 1/2. Catalyzes the reversible reaction in which hydroxymethyl group from 5,10-methylenetetrahydrofolate is transferred onto alpha-ketoisovalerate to form ketopantoate. This Aliivibrio fischeri (strain MJ11) (Vibrio fischeri) protein is 3-methyl-2-oxobutanoate hydroxymethyltransferase.